Consider the following 663-residue polypeptide: Rap1 GTPase-activating protein 1 (663 aa).

Residues 1–17 (MIEKMQGSRMDEQRCSF) form the GoLoco domain. The tract at residues 1–23 (MIEKMQGSRMDEQRCSFPPPLKT) is disordered. The residue at position 17 (F17) is a Phosphoserine. A Rap-GAP domain is found at 181 to 397 (IVTFDEHVIS…RTRAALLETL (217 aa)). Phosphoserine is present on S441. Disordered regions lie at residues 442–604 (MDAM…PHKR) and 616–645 (SVST…PACP). The segment covering 450–465 (KKPNTVSTSHSGSFAP) has biased composition (polar residues). Phosphoserine occurs at positions 484, 499, 515, 541, and 542. The span at 535–549 (ENSSTQSSPEMPTTK) shows a compositional bias: polar residues. The segment covering 567 to 579 (RSSSSASSFASVV) has biased composition (low complexity). The segment covering 580–591 (EETEGVDGEDTG) has biased composition (acidic residues). The segment covering 616–630 (SVSTTSGGSSPGPSR) has biased composition (low complexity).

As to quaternary structure, homodimer and heterodimer with RAP1B. In terms of tissue distribution, significant expression seen in the brain, kidney and pancreas. Abundant in the cerebral cortex and expressed at much lower levels in the spinal cord. Not detected in the lymphoid tissues.

Its subcellular location is the golgi apparatus membrane. GTPase activator for the nuclear Ras-related regulatory protein RAP-1A (KREV-1), converting it to the putatively inactive GDP-bound state. The chain is Rap1 GTPase-activating protein 1 (RAP1GAP) from Homo sapiens (Human).